We begin with the raw amino-acid sequence, 495 residues long: UDP-glycosyltransferase 73C11 (495 aa).

H24 acts as the Proton acceptor in catalysis. H24 provides a ligand contact to an anthocyanidin. D129 serves as the catalytic Charge relay. UDP-alpha-D-glucose contacts are provided by Q358, H373, W376, N377, S378, and E381. G396 contacts an anthocyanidin. Positions 397 and 398 each coordinate UDP-alpha-D-glucose.

It belongs to the UDP-glycosyltransferase family.

The catalysed reaction is oleanolate + UDP-alpha-D-glucose = oleanolate 3-O-beta-D-glucoside + UDP + H(+). In terms of biological role, catalyzes the transfer of a glucose (Glc) moiety from UDP-Glc to the C-3 position of the oleanane sapogenins oleanolate and hederagenin, and to the C-28 carboxylic group of the lupane sapogenin betulinate. The monoglucosylated hederagenin 3-O-beta-D-glucoside is a feeding deterrent of the yellow-striped flea beetle (Phyllotreta nemorum). The chain is UDP-glycosyltransferase 73C11 from Barbarea vulgaris (Yellow rocket).